Reading from the N-terminus, the 351-residue chain is Histidinol-phosphate aminotransferase (351 aa).

An N6-(pyridoxal phosphate)lysine modification is found at Lys-221.

The protein belongs to the class-II pyridoxal-phosphate-dependent aminotransferase family. Histidinol-phosphate aminotransferase subfamily. As to quaternary structure, homodimer. It depends on pyridoxal 5'-phosphate as a cofactor.

The enzyme catalyses L-histidinol phosphate + 2-oxoglutarate = 3-(imidazol-4-yl)-2-oxopropyl phosphate + L-glutamate. Its pathway is amino-acid biosynthesis; L-histidine biosynthesis; L-histidine from 5-phospho-alpha-D-ribose 1-diphosphate: step 7/9. The sequence is that of Histidinol-phosphate aminotransferase from Staphylococcus haemolyticus (strain JCSC1435).